We begin with the raw amino-acid sequence, 304 residues long: tRNA uridine(34) hydroxylase (304 aa).

A Rhodanese domain is found at glutamine 124–serine 219. The Cysteine persulfide intermediate role is filled by cysteine 179.

It belongs to the TrhO family.

The catalysed reaction is uridine(34) in tRNA + AH2 + O2 = 5-hydroxyuridine(34) in tRNA + A + H2O. In terms of biological role, catalyzes oxygen-dependent 5-hydroxyuridine (ho5U) modification at position 34 in tRNAs. The chain is tRNA uridine(34) hydroxylase from Bartonella quintana (strain Toulouse) (Rochalimaea quintana).